A 364-amino-acid polypeptide reads, in one-letter code: Protein leg1a (364 aa).

The N-terminal stretch at 1 to 22 (MSEMGFLRSVAAVLLLAVFSHA) is a signal peptide. N-linked (GlcNAc...) asparagine glycosylation is present at N70.

The protein belongs to the LEG1 family. In terms of tissue distribution, detected in all tissues tested, with the highest levels in serum (at protein level). At mRNA level, only expressed in liver.

The protein resides in the secreted. Its function is as follows. Important for early development of liver, exocrine pancreas and intestine, probably through cell cycle regulation. In liver, its function is partially redundant with leg1b function. The protein is Protein leg1a of Danio rerio (Zebrafish).